Consider the following 128-residue polypeptide: Glycine cleavage system H protein (128 aa).

A Lipoyl-binding domain is found at 24-106; the sequence is VYTVGITEHA…YAEGFLFQIK (83 aa). K65 is subject to N6-lipoyllysine.

It belongs to the GcvH family. In terms of assembly, the glycine cleavage system is composed of four proteins: P, T, L and H. The cofactor is (R)-lipoate.

The glycine cleavage system catalyzes the degradation of glycine. The H protein shuttles the methylamine group of glycine from the P protein to the T protein. This chain is Glycine cleavage system H protein, found in Serratia proteamaculans (strain 568).